The sequence spans 1928 residues: Lactase/phlorizin hydrolase (1928 aa).

The N-terminal stretch at 1-21 (MELPWTALFLSTVLLGLSCQG) is a signal peptide. Residues 22 to 867 (SDWESDRNFI…LPVRADFTSR (846 aa)) constitute a propeptide, XBetaGly. Topologically, residues 22–1883 (SDWESDRNFI…LMLGIAEAQT (1862 aa)) are extracellular. A glycosyl hydrolase-1 1; Region I region spans residues 46-289 (NYPPGKQGSD…FIYTLKLEDC (244 aa)). Positions 364 to 856 (VWAAFANQSR…GFSAKKVKRN (493 aa)) are glycosyl hydrolase-1 2; Region II. Asparagine 370, asparagine 514, asparagine 824, asparagine 936, asparagine 948, asparagine 991, and asparagine 1037 each carry an N-linked (GlcNAc...) asparagine glycan. Residues 904–1367 (RFRDDFLWGV…DLIANNGMPL (464 aa)) are glycosyl hydrolase-1 3; Region III. Phlorizin hydrolase/Glycosylceramidase activity. Residue glutamate 1067 is the Proton donor; for phlorizin hydrolase/Glycosylceramidase activity of the active site. N-linked (GlcNAc...) asparagine glycans are attached at residues asparagine 1176 and asparagine 1240. Glutamate 1274 acts as the Nucleophile; for phlorizin hydrolase/Glycosylceramidase activity in catalysis. N-linked (GlcNAc...) asparagine glycans are attached at residues asparagine 1281 and asparagine 1509. The interval 1374–1847 (LYGEFPKGFI…CNGFPDPAQG (474 aa)) is glycosyl hydrolase-1 4; Region IV. Lactase activity. Glutamate 1539 serves as the catalytic Proton donor; for lactase activity. N-linked (GlcNAc...) asparagine glycosylation is found at asparagine 1657 and asparagine 1684. The active-site Nucleophile; for lactase activity is glutamate 1750. Residues asparagine 1762 and asparagine 1815 are each glycosylated (N-linked (GlcNAc...) asparagine). A helical membrane pass occupies residues 1884–1902 (ALYVLFALLLLGACSLAFL). At 1903–1928 (TYNTGRRSKQGNAQPSQHQLSPISSF) the chain is on the cytoplasmic side.

It belongs to the glycosyl hydrolase 1 family. In terms of assembly, homodimer. In terms of processing, N-glycosylated. In terms of tissue distribution, intestine.

The protein localises to the apical cell membrane. It catalyses the reaction lactose + H2O = beta-D-galactose + D-glucose. The catalysed reaction is phlorizin + H2O = phloretin + beta-D-glucose. The enzyme catalyses D-cellobiose + H2O = beta-D-glucose + D-glucose. It carries out the reaction quercetin 4'-O-beta-D-glucoside + H2O = quercetin + beta-D-glucose. It catalyses the reaction quercetin 3-O-beta-D-glucoside + H2O = quercetin + beta-D-glucose. The catalysed reaction is kaempferol 3-O-beta-D-glucoside + H2O = kaempferol + beta-D-glucose. The enzyme catalyses luteolin 7-O-beta-D-glucoside + H2O = luteolin + beta-D-glucose. It carries out the reaction luteolin 4'-O-beta-D-glucoside + H2O = luteolin + beta-D-glucose. It catalyses the reaction (2S)-naringenin 7-O-beta-D-glucoside + H2O = (2S)-naringenin + beta-D-glucose. The catalysed reaction is eriodictyol-7-O-beta-D-glucoside + H2O = (S)-eriodictyol + beta-D-glucose. The enzyme catalyses apigenin 7-O-beta-D-glucoside + H2O = apigenin + beta-D-glucose. It carries out the reaction daidzein 7-O-beta-D-glucoside + H2O = daidzein + beta-D-glucose + H(+). It catalyses the reaction genistein 7-O-beta-D-glucoside + H2O = genistein + beta-D-glucose. The catalysed reaction is a beta-D-galactosyl-N-acylsphingosine + H2O = a ceramide + beta-D-galactose.. The enzyme catalyses beta-D-glucosyl-(1&lt;-&gt;1')-N-hexadecanoylsphing-4-enine + H2O = N-hexadecanoylsphing-4-enine + beta-D-glucose. It carries out the reaction beta-D-galactosyl-(1&lt;-&gt;1')-N-hexadecanoylsphing-4-enine + H2O = beta-D-galactose + N-hexadecanoylsphing-4-enine. It catalyses the reaction beta-D-galactosyl-(1&lt;-&gt;1')-N-hexadecanoylsphinganine + H2O = N-hexadecanoylsphinganine + beta-D-galactose. The catalysed reaction is beta-D-glucosyl-(1&lt;-&gt;1')-N-hexadecanoylsphinganine + H2O = N-hexadecanoylsphinganine + beta-D-glucose. Functionally, broad specificity glycosidase of the intestinal brush border membrane that hydrolyzes lactose, the main sugar in mammalian milk, to produce D-glucose and D-galactose. The mature protein is composed of two domains that catalyze the hydrolysis of beta-glucopyranosides and beta-galactopyranosides, with a preference for hydrophilic aglycones (in lactose and cellobiose) for one domain and hydrophobic aglycones (in phlorizin and glycosylceramides) for the other. In Rattus norvegicus (Rat), this protein is Lactase/phlorizin hydrolase.